Reading from the N-terminus, the 244-residue chain is Pyridoxine 5'-phosphate synthase (244 aa).

3-amino-2-oxopropyl phosphate is bound at residue Asn12. A 1-deoxy-D-xylulose 5-phosphate-binding site is contributed by 14 to 15 (DH). A 3-amino-2-oxopropyl phosphate-binding site is contributed by Arg23. The active-site Proton acceptor is the His48. 2 residues coordinate 1-deoxy-D-xylulose 5-phosphate: Arg50 and His55. Glu75 serves as the catalytic Proton acceptor. Thr105 contributes to the 1-deoxy-D-xylulose 5-phosphate binding site. His196 acts as the Proton donor in catalysis. Residues Gly197 and 218 to 219 (GH) contribute to the 3-amino-2-oxopropyl phosphate site.

It belongs to the PNP synthase family. As to quaternary structure, homooctamer; tetramer of dimers.

It is found in the cytoplasm. It carries out the reaction 3-amino-2-oxopropyl phosphate + 1-deoxy-D-xylulose 5-phosphate = pyridoxine 5'-phosphate + phosphate + 2 H2O + H(+). Its pathway is cofactor biosynthesis; pyridoxine 5'-phosphate biosynthesis; pyridoxine 5'-phosphate from D-erythrose 4-phosphate: step 5/5. Its function is as follows. Catalyzes the complicated ring closure reaction between the two acyclic compounds 1-deoxy-D-xylulose-5-phosphate (DXP) and 3-amino-2-oxopropyl phosphate (1-amino-acetone-3-phosphate or AAP) to form pyridoxine 5'-phosphate (PNP) and inorganic phosphate. The polypeptide is Pyridoxine 5'-phosphate synthase (Alcanivorax borkumensis (strain ATCC 700651 / DSM 11573 / NCIMB 13689 / SK2)).